Reading from the N-terminus, the 953-residue chain is Ubiquitin carboxyl-terminal hydrolase CYLD (953 aa).

The tract at residues 106-590 is interaction with TRIP; sequence CEERLSLFRN…LEIMIGKKKG (485 aa). CAP-Gly domains follow at residues 153–198 and 253–286; these read LAER…VFVA and DVLPGKESLGYFVGVDMDNPIGNWDGRFDGVQLC. The tract at residues 318–350 is disordered; it reads FMSRGVGDKGSSSHNKPKVTGSTSDPGSRNRSE. A compositionally biased stretch (polar residues) spans 327–346; the sequence is GSSSHNKPKVTGSTSDPGSR. Position 384 is a phosphoserine (Ser384). The disordered stretch occupies residues 387–410; sequence EMSSDFGHSSPPPQPPSMNSLSSE. An interaction with TRAF2 region spans residues 391–466; it reads DFGHSSPPPQ…MPSSSGNAHG (76 aa). Phosphoserine occurs at positions 415 and 419. The segment at 467-681 is interaction with IKBKG/NEMO; sequence LEVGSLAEVK…FTSEEKDPEE (215 aa). One can recognise a CAP-Gly 3 domain in the interval 489–532; that stretch reads GQPPGLSDVLAGLELEDECAGCTDGTFRGTRYFTCALKKALFVK. A USP domain is found at 589–947; sequence KGIQGHYNSC…DAYMCMYQSP (359 aa). Cys598 functions as the Nucleophile in the catalytic mechanism. Residues 778 to 830 are B-box; the sequence is LEDTPRQCRICGGLAMYECRECYDDPDISAGKIKQFCKTCSTQVHLHPRRLNH. Zn(2+) is bound by residues Cys785, Cys788, Cys796, Cys799, Cys814, Cys817, His822, and His830. The active-site Proton acceptor is the His868.

Belongs to the peptidase C19 family. As to quaternary structure, interacts (via CAP-Gly domain) with IKBKG/NEMO (via proline-rich C-terminal region). Interacts with TRAF2 and TRIP. Interacts with PLK1, DVL1, DVL3, MAVS, TBK1, IKKE and RIGI. Interacts (via CAP-Gly domain) with microtubules. Interacts with HDAC6 and BCL3. Interacts with MAP3K7. Identified in a complex with TRAF6 and SQSTM1. Interacts with OPTN and SQSTM1. Interacts with CEP350. Interacts with RNF31; the interaction is indirect and is mediated via SPATA2. Interacts with SPATA2 (via the PUB domain); the interaction is direct and recruits CYLD to the LUBAC complex, thereby regulating TNF-alpha-induced necroptosis. Phosphorylated on several serine residues by IKKA and/or IKKB in response to immune stimuli. Phosphorylation requires IKBKG. Phosphorylation abolishes TRAF2 deubiquitination, interferes with the activation of Jun kinases, and strongly reduces CD40-dependent gene activation by NF-kappa-B. In terms of processing, ubiquitinated. Polyubiquitinated in hepatocytes treated with palmitic acid. Ubiquitination is mediated by E3 ligase TRIM47 and leads to proteasomal degradation.

The protein resides in the cytoplasm. It is found in the perinuclear region. The protein localises to the cytoskeleton. It localises to the cell membrane. Its subcellular location is the microtubule organizing center. The protein resides in the centrosome. It is found in the spindle. The protein localises to the cilium basal body. It carries out the reaction Thiol-dependent hydrolysis of ester, thioester, amide, peptide and isopeptide bonds formed by the C-terminal Gly of ubiquitin (a 76-residue protein attached to proteins as an intracellular targeting signal).. Functionally, deubiquitinase that specifically cleaves 'Lys-63'- and linear 'Met-1'-linked polyubiquitin chains and is involved in NF-kappa-B activation and TNF-alpha-induced necroptosis. Negatively regulates NF-kappa-B activation by deubiquitinating upstream signaling factors. Contributes to the regulation of cell survival, proliferation and differentiation via its effects on NF-kappa-B activation. Negative regulator of Wnt signaling. Inhibits HDAC6 and thereby promotes acetylation of alpha-tubulin and stabilization of microtubules. Plays a role in the regulation of microtubule dynamics, and thereby contributes to the regulation of cell proliferation, cell polarization, cell migration, and angiogenesis. Required for normal cell cycle progress and normal cytokinesis. Inhibits nuclear translocation of NF-kappa-B. Plays a role in the regulation of inflammation and the innate immune response, via its effects on NF-kappa-B activation. Dispensable for the maturation of intrathymic natural killer cells, but required for the continued survival of immature natural killer cells. Negatively regulates TNFRSF11A signaling and osteoclastogenesis. Involved in the regulation of ciliogenesis, allowing ciliary basal bodies to migrate and dock to the plasma membrane; this process does not depend on NF-kappa-B activation. Ability to remove linear ('Met-1'-linked) polyubiquitin chains regulates innate immunity and TNF-alpha-induced necroptosis: recruited to the LUBAC complex via interaction with SPATA2 and restricts linear polyubiquitin formation on target proteins. Regulates innate immunity by restricting linear polyubiquitin formation on RIPK2 in response to NOD2 stimulation. Involved in TNF-alpha-induced necroptosis by removing linear ('Met-1'-linked) polyubiquitin chains from RIPK1, thereby regulating the kinase activity of RIPK1. Negatively regulates intestinal inflammation by removing 'Lys-63' linked polyubiquitin chain of NLRP6, thereby reducing the interaction between NLRP6 and PYCARD/ASC and formation of the NLRP6 inflammasome. Does not catalyze deubiquitination of heterotypic 'Lys-63'-/'Lys-48'-linked branched ubiquitin chains. Removes 'Lys-63' linked polyubiquitin chain of MAP3K7, which inhibits phosphorylation and blocks downstream activation of the JNK-p38 kinase cascades. Also removes 'Lys-63'-linked polyubiquitin chains of MAP3K1 and MA3P3K3, which inhibit their interaction with MAP2K1 and MAP2K2. This Rattus norvegicus (Rat) protein is Ubiquitin carboxyl-terminal hydrolase CYLD (Cyld).